We begin with the raw amino-acid sequence, 209 residues long: MAKDLDELLDEVETKFCRLDPLRLDLGERPKGDGGGGSHSGDRNGAQEKETLRSTETFKKEDDLDSLINEIFEEPDFDRKSFQKFKSKSSSNTCVRAPMQGVSKSCSPVYLSGSAIPCGIGTNTSQRACDRLRCVACDFRIVSYNDYMWDKSCDYLFFRNNMPEFHKLKTKLIEKKGARAYACQCSWRTVEELTDLQTDHQLRWVCGKH.

The interval 1-76 (MAKDLDELLD…LINEIFEEPD (76 aa)) is required for interaction with FAM161A. A disordered region spans residues 24–58 (LDLGERPKGDGGGGSHSGDRNGAQEKETLRSTETF). The span at 40 to 58 (SGDRNGAQEKETLRSTETF) shows a compositional bias: basic and acidic residues.

In terms of assembly, interacts (via N-terminus) with FAM161A (via central region); the interaction is direct. In terms of tissue distribution, expressed in multiple tissues, including the brain, kidney, lung, spleen, heart, trachea and testis. Expressed in the retina (at protein level).

The protein resides in the cytoplasm. It localises to the photoreceptor inner segment. May be involved in photoreceptor outer segment disk morphogenesis. The polypeptide is Cilia- and flagella-associated protein 418 (Mus musculus (Mouse)).